The sequence spans 491 residues: MSSQIIPVEPFDYVVFGGTGDLAERKLLPALYHRQMEGQFTEPTRIIGASRASLSHDEYRRFASDALKEHLKSGEFNEAEVEKFTSRLYYVSVDAKSEQGWDDLKKLLEEGKDRTRAFYLAVGPAIFSDISEKIRDHKLITRNTRIVVEKPIGRDLASATELNDTIGKVFREEQIFRIDHYLGKETVQNLMALRFANALYEPLWNSAHIDHVQITVSEAVGLENRAGYYDKAGALRDMVQNHILQLLCFVAMEAPTSMDAEAVRDEKLKVLRALKPITASNVEQVTVRGQYRAGASSGGPVKGYLEELEGGVSNTETFVAIKAEISNWRWAGVPFYLRTGKRMAGRMSEIVITFKQIPHSIFDQSAGRISANQLMIRLQPNEGVKQSLMIKDPGPGGMRLRNVPLDMSFAEAFAVRNADAYERLLLDVIRNNQTLFVRRDEVEAAWQWIDPILKAWEATGQQVQGYTAGTWGPSQSIALIERDGRTWNDAI.

NADP(+)-binding residues include R51 and K150. Substrate is bound by residues H180, K184, E218, and D237. H242 (proton acceptor) is an active-site residue. K341 contributes to the substrate binding site.

Belongs to the glucose-6-phosphate dehydrogenase family.

It carries out the reaction D-glucose 6-phosphate + NADP(+) = 6-phospho-D-glucono-1,5-lactone + NADPH + H(+). It participates in carbohydrate degradation; pentose phosphate pathway; D-ribulose 5-phosphate from D-glucose 6-phosphate (oxidative stage): step 1/3. Its function is as follows. Catalyzes the oxidation of glucose 6-phosphate to 6-phosphogluconolactone. The sequence is that of Glucose-6-phosphate 1-dehydrogenase from Rhizobium meliloti (strain 1021) (Ensifer meliloti).